The chain runs to 423 residues: Dihydroorotase-like protein (423 aa).

Belongs to the metallo-dependent hydrolases superfamily. DHOase family. PyrC' subfamily. Heterododecamer of 6 active PyrB subunits and 6 non-catalytic PyrC' subunits.

In terms of biological role, non-functional DHOase. The polypeptide is Dihydroorotase-like protein (pyrC') (Pseudomonas aeruginosa (strain ATCC 15692 / DSM 22644 / CIP 104116 / JCM 14847 / LMG 12228 / 1C / PRS 101 / PAO1)).